A 342-amino-acid polypeptide reads, in one-letter code: Cytoplasmic tRNA 2-thiolation protein 1 (342 aa).

Belongs to the TtcA family. CTU1/NCS6/ATPBD3 subfamily.

It localises to the cytoplasm. Its pathway is tRNA modification; 5-methoxycarbonylmethyl-2-thiouridine-tRNA biosynthesis. Plays a central role in 2-thiolation of mcm(5)S(2)U at tRNA wobble positions of tRNA(Lys), tRNA(Glu) and tRNA(Gln). Directly binds tRNAs and probably acts by catalyzing adenylation of tRNAs, an intermediate required for 2-thiolation. It is unclear whether it acts as a sulfurtransferase that transfers sulfur from thiocarboxylated URM1 onto the uridine of tRNAs at wobble position. In Anopheles gambiae (African malaria mosquito), this protein is Cytoplasmic tRNA 2-thiolation protein 1.